The following is an 803-amino-acid chain: Phenylalanine--tRNA ligase beta subunit (803 aa).

Residues 39-152 (TPGFQKVVAG…PDASPGADAA (114 aa)) form the tRNA-binding domain. Residues 406 to 480 (RQPVTIELRP…RLYGYNRIPV (75 aa)) enclose the B5 domain. The Mg(2+) site is built by aspartate 458, aspartate 464, glutamate 467, and glutamate 468. The FDX-ACB domain maps to 709–802 (PRFPAVERDL…LEERLGASLR (94 aa)).

It belongs to the phenylalanyl-tRNA synthetase beta subunit family. Type 1 subfamily. In terms of assembly, tetramer of two alpha and two beta subunits. Mg(2+) is required as a cofactor.

It is found in the cytoplasm. It catalyses the reaction tRNA(Phe) + L-phenylalanine + ATP = L-phenylalanyl-tRNA(Phe) + AMP + diphosphate + H(+). The sequence is that of Phenylalanine--tRNA ligase beta subunit from Moorella thermoacetica (strain ATCC 39073 / JCM 9320).